The following is a 619-amino-acid chain: Threonine--tRNA ligase (619 aa).

The tract at residues 1 to 143 is editing domain; sequence MQLLLIHSDF…SRSIRIGEGE (143 aa). The interval 201 to 500 is catalytic; it reads PHVELMRRLE…AANGGLPMLP (300 aa). 3 residues coordinate Zn(2+): cysteine 293, histidine 345, and histidine 469.

Belongs to the class-II aminoacyl-tRNA synthetase family. As to quaternary structure, homodimer. It depends on Zn(2+) as a cofactor.

The protein resides in the cytoplasm. The enzyme catalyses tRNA(Thr) + L-threonine + ATP = L-threonyl-tRNA(Thr) + AMP + diphosphate + H(+). In terms of biological role, catalyzes the attachment of threonine to tRNA(Thr) in a two-step reaction: L-threonine is first activated by ATP to form Thr-AMP and then transferred to the acceptor end of tRNA(Thr). Also edits incorrectly charged L-seryl-tRNA(Thr). In Methanothrix thermoacetophila (strain DSM 6194 / JCM 14653 / NBRC 101360 / PT) (Methanosaeta thermophila), this protein is Threonine--tRNA ligase.